We begin with the raw amino-acid sequence, 221 residues long: MHYRDQSLGELAITIPRATALFREFNLDFCCGGKQTLLRAATKRALDIDMLESRLADLSTQPSTEKDWQQASLGEMIVHIISRFHDRHRAQLPELIRMAEKVERVHHDKPGCPIGLTDQLTLIHDDLTQHMMKEERILFPMIQSGMGTQAGGPISVMEHEHDDAGQQLDVIKSLTNDVTPPDNACTTWRALYTGINEFIDDLMEHIHLENNQLFPRALRGE.

This sequence belongs to the RIC family. YtfE subfamily. In terms of assembly, homodimer.

It localises to the cytoplasm. Its function is as follows. Di-iron-containing protein involved in the repair of iron-sulfur clusters damaged by oxidative and nitrosative stress conditions. The polypeptide is Iron-sulfur cluster repair protein YtfE (Dickeya chrysanthemi (strain Ech1591) (Dickeya zeae (strain Ech1591))).